Here is an 874-residue protein sequence, read N- to C-terminus: Alanine--tRNA ligase (874 aa).

4 residues coordinate Zn(2+): H562, H566, C665, and H669.

It belongs to the class-II aminoacyl-tRNA synthetase family. The cofactor is Zn(2+).

Its subcellular location is the cytoplasm. The catalysed reaction is tRNA(Ala) + L-alanine + ATP = L-alanyl-tRNA(Ala) + AMP + diphosphate. Its function is as follows. Catalyzes the attachment of alanine to tRNA(Ala) in a two-step reaction: alanine is first activated by ATP to form Ala-AMP and then transferred to the acceptor end of tRNA(Ala). Also edits incorrectly charged Ser-tRNA(Ala) and Gly-tRNA(Ala) via its editing domain. The protein is Alanine--tRNA ligase of Pseudomonas entomophila (strain L48).